The following is a 263-amino-acid chain: Purine nucleoside phosphorylase SACOL1200 (263 aa).

Positions 79, 124, and 141 each coordinate Zn(2+).

It belongs to the purine nucleoside phosphorylase YfiH/LACC1 family. As to quaternary structure, homodimer. Requires Cu(2+) as cofactor. Zn(2+) is required as a cofactor.

It catalyses the reaction adenosine + phosphate = alpha-D-ribose 1-phosphate + adenine. It carries out the reaction S-methyl-5'-thioadenosine + phosphate = 5-(methylsulfanyl)-alpha-D-ribose 1-phosphate + adenine. The catalysed reaction is inosine + phosphate = alpha-D-ribose 1-phosphate + hypoxanthine. The enzyme catalyses adenosine + H2O + H(+) = inosine + NH4(+). Its function is as follows. Purine nucleoside enzyme that catalyzes the phosphorolysis of adenosine and inosine nucleosides, yielding D-ribose 1-phosphate and the respective free bases, adenine and hypoxanthine. Also catalyzes the phosphorolysis of S-methyl-5'-thioadenosine into adenine and S-methyl-5-thio-alpha-D-ribose 1-phosphate. Also has adenosine deaminase activity. The protein is Purine nucleoside phosphorylase SACOL1200 of Staphylococcus aureus (strain COL).